The chain runs to 352 residues: Cyclin-dependent kinase-like 1 (352 aa).

The region spanning 4–287 (YEKIGKIGEG…CEQLLQHPYF (284 aa)) is the Protein kinase domain. ATP-binding positions include 10–18 (IGEGSYGVV) and Lys33. Residues 45 to 51 (KKIALRE) carry the [NKR]KIAxRE motif. Asp126 acts as the Proton acceptor in catalysis.

It belongs to the protein kinase superfamily. CMGC Ser/Thr protein kinase family. CDC2/CDKX subfamily.

Its subcellular location is the cytoplasm. It is found in the nucleus. The catalysed reaction is L-seryl-[protein] + ATP = O-phospho-L-seryl-[protein] + ADP + H(+). It catalyses the reaction L-threonyl-[protein] + ATP = O-phospho-L-threonyl-[protein] + ADP + H(+). The polypeptide is Cyclin-dependent kinase-like 1 (Mus musculus (Mouse)).